A 147-amino-acid polypeptide reads, in one-letter code: Large ribosomal subunit protein uL13 (147 aa).

The protein belongs to the universal ribosomal protein uL13 family. As to quaternary structure, part of the 50S ribosomal subunit.

Functionally, this protein is one of the early assembly proteins of the 50S ribosomal subunit, although it is not seen to bind rRNA by itself. It is important during the early stages of 50S assembly. In Polaromonas naphthalenivorans (strain CJ2), this protein is Large ribosomal subunit protein uL13.